The chain runs to 312 residues: Glycerol 2-dehydrogenase (NADP(+)) (312 aa).

Catalysis depends on tyrosine 56, which acts as the Proton donor. Residue histidine 112 coordinates substrate. Position 220-274 (220-274) interacts with NADP(+); that stretch reads SPLGSTDAPLLKEPVILEIAKKNNVQPGHVVISWHVQRGYVVLPKSVNPDRIKTN. Serine 306 carries the post-translational modification Phosphoserine.

Belongs to the aldo/keto reductase family.

The protein resides in the cytoplasm. It catalyses the reaction glycerol + NADP(+) = dihydroxyacetone + NADPH + H(+). Its function is as follows. Glycerol dehydrogenase involved in glycerol catabolism under microaerobic conditions. Has mRNA binding activity. This is Glycerol 2-dehydrogenase (NADP(+)) (GCY1) from Saccharomyces cerevisiae (strain ATCC 204508 / S288c) (Baker's yeast).